A 481-amino-acid polypeptide reads, in one-letter code: tRNA sulfurtransferase (481 aa).

Residues Ala-54–Ile-156 form the THUMP domain. Residues Leu-174–Val-175, Lys-256, Gly-278, and Gln-287 each bind ATP. Cys-334 and Cys-433 are disulfide-bonded. The region spanning Ile-388–Lys-463 is the Rhodanese domain. Cys-433 functions as the Cysteine persulfide intermediate in the catalytic mechanism.

The protein belongs to the ThiI family.

The protein localises to the cytoplasm. The enzyme catalyses [ThiI sulfur-carrier protein]-S-sulfanyl-L-cysteine + a uridine in tRNA + 2 reduced [2Fe-2S]-[ferredoxin] + ATP + H(+) = [ThiI sulfur-carrier protein]-L-cysteine + a 4-thiouridine in tRNA + 2 oxidized [2Fe-2S]-[ferredoxin] + AMP + diphosphate. The catalysed reaction is [ThiS sulfur-carrier protein]-C-terminal Gly-Gly-AMP + S-sulfanyl-L-cysteinyl-[cysteine desulfurase] + AH2 = [ThiS sulfur-carrier protein]-C-terminal-Gly-aminoethanethioate + L-cysteinyl-[cysteine desulfurase] + A + AMP + 2 H(+). It participates in cofactor biosynthesis; thiamine diphosphate biosynthesis. Its function is as follows. Catalyzes the ATP-dependent transfer of a sulfur to tRNA to produce 4-thiouridine in position 8 of tRNAs, which functions as a near-UV photosensor. Also catalyzes the transfer of sulfur to the sulfur carrier protein ThiS, forming ThiS-thiocarboxylate. This is a step in the synthesis of thiazole, in the thiamine biosynthesis pathway. The sulfur is donated as persulfide by IscS. The protein is tRNA sulfurtransferase of Thermoplasma acidophilum (strain ATCC 25905 / DSM 1728 / JCM 9062 / NBRC 15155 / AMRC-C165).